We begin with the raw amino-acid sequence, 200 residues long: Probable molybdenum cofactor guanylyltransferase (200 aa).

GTP-binding positions include 9–11 (LAG), lysine 21, aspartate 69, and aspartate 100. Aspartate 100 is a binding site for Mg(2+).

This sequence belongs to the MobA family. The cofactor is Mg(2+).

It localises to the cytoplasm. The catalysed reaction is Mo-molybdopterin + GTP + H(+) = Mo-molybdopterin guanine dinucleotide + diphosphate. Functionally, transfers a GMP moiety from GTP to Mo-molybdopterin (Mo-MPT) cofactor (Moco or molybdenum cofactor) to form Mo-molybdopterin guanine dinucleotide (Mo-MGD) cofactor. In Bacillus cereus (strain G9842), this protein is Probable molybdenum cofactor guanylyltransferase.